The primary structure comprises 171 residues: 3-hydroxydecanoyl-[acyl-carrier-protein] dehydratase (171 aa).

The active site involves H70.

This sequence belongs to the thioester dehydratase family. FabA subfamily. In terms of assembly, homodimer.

It is found in the cytoplasm. It catalyses the reaction a (3R)-hydroxyacyl-[ACP] = a (2E)-enoyl-[ACP] + H2O. The enzyme catalyses (3R)-hydroxydecanoyl-[ACP] = (2E)-decenoyl-[ACP] + H2O. It carries out the reaction (2E)-decenoyl-[ACP] = (3Z)-decenoyl-[ACP]. The protein operates within lipid metabolism; fatty acid biosynthesis. Necessary for the introduction of cis unsaturation into fatty acids. Catalyzes the dehydration of (3R)-3-hydroxydecanoyl-ACP to E-(2)-decenoyl-ACP and then its isomerization to Z-(3)-decenoyl-ACP. Can catalyze the dehydratase reaction for beta-hydroxyacyl-ACPs with saturated chain lengths up to 16:0, being most active on intermediate chain length. In Shewanella halifaxensis (strain HAW-EB4), this protein is 3-hydroxydecanoyl-[acyl-carrier-protein] dehydratase.